Reading from the N-terminus, the 420-residue chain is Protein-lysine N-trimethyltransferase SMYD5 (420 aa).

The 330-residue stretch at Ala-29 to Leu-358 folds into the SET domain. The MYND-type zinc-finger motif lies at Pro-104–Cys-142. Tyr-357 is a binding site for S-adenosyl-L-methionine. A disordered region spans residues Asp-392–Val-420.

It belongs to the class V-like SAM-binding methyltransferase superfamily.

It is found in the cytoplasm. It carries out the reaction L-lysyl-[protein] + 3 S-adenosyl-L-methionine = N(6),N(6),N(6)-trimethyl-L-lysyl-[protein] + 3 S-adenosyl-L-homocysteine + 3 H(+). The catalysed reaction is L-lysyl(20)-[histone H4] + 3 S-adenosyl-L-methionine = N(6),N(6),N(6)-trimethyl-L-lysyl(20)-[histone H4] + 3 S-adenosyl-L-homocysteine + 3 H(+). It catalyses the reaction L-lysyl(36)-[histone H3] + 3 S-adenosyl-L-methionine = N(6),N(6),N(6)-trimethyl-L-lysyl(36)-[histone H3] + 3 S-adenosyl-L-homocysteine + 3 H(+). Functionally, protein-lysine N-trimethyltransferase that specifically catalyzes trimethylation of 'Lys-22' of the RPL40/eL40 subunit of the 60S ribosome, thereby promoting translation elongation and protein synthesis. May also act as a histone methyltransferase in the context of histone octamers, but not on nucleosome substrates: trimethylates 'Lys-36' of histone H3 and 'Lys-20' of histone H4 to form H3K36me3 and H4K20me3, respectively. The histone methyltransferase activity, which is independent of its SET domain, is however unsure in vivo. This Gallus gallus (Chicken) protein is Protein-lysine N-trimethyltransferase SMYD5 (SMYD5).